The following is a 281-amino-acid chain: Translation initiation factor IF3-4, chloroplastic (281 aa).

A chloroplast-targeting transit peptide spans 1-51; that stretch reads MAGITSTVGFNAILAGATKTVSHPVKSKLFGLRLCVPEFSIVSLSPYHHRR. Disordered regions lie at residues 63–86 and 253–281; these read GGGG…DDSL and KVQE…TQDI. 2 stretches are compositionally biased toward basic and acidic residues: residues 70 to 79 and 253 to 270; these read PGDRRGRQKE and KVQE…DDKV.

This sequence belongs to the IF-3 family. As to quaternary structure, monomer.

Its subcellular location is the plastid. It localises to the chloroplast. Its function is as follows. Chloroplast translation initiation factor that is essential for the coordination of leaf and chloroplast development. IF-3 binds to the 30S ribosomal subunit and shifts the equilibrium between 70S ribosomes and their 50S and 30S subunits in favor of the free subunits, thus enhancing the availability of 30S subunits on which protein synthesis initiation begins. This is Translation initiation factor IF3-4, chloroplastic from Arabidopsis thaliana (Mouse-ear cress).